A 715-amino-acid chain; its full sequence is Polyribonucleotide nucleotidyltransferase (715 aa).

Positions 491 and 497 each coordinate Mg(2+). The KH domain maps to 558–617; the sequence is PKIMTMTINPEKIRDVIGPQGRVINKIIEETGVKIDIEQDGRVFIASINHEANLRAKQII. The S1 motif domain maps to 627–695; the sequence is GQVYLGTVKR…DQGRVNLSRK (69 aa).

The protein belongs to the polyribonucleotide nucleotidyltransferase family. The cofactor is Mg(2+).

It is found in the cytoplasm. The catalysed reaction is RNA(n+1) + phosphate = RNA(n) + a ribonucleoside 5'-diphosphate. In terms of biological role, involved in mRNA degradation. Catalyzes the phosphorolysis of single-stranded polyribonucleotides processively in the 3'- to 5'-direction. The chain is Polyribonucleotide nucleotidyltransferase from Brevibacillus brevis (strain 47 / JCM 6285 / NBRC 100599).